Consider the following 133-residue polypeptide: Small ribosomal subunit protein uS8 (133 aa).

Belongs to the universal ribosomal protein uS8 family. As to quaternary structure, part of the 30S ribosomal subunit. Contacts proteins S5 and S12.

Its function is as follows. One of the primary rRNA binding proteins, it binds directly to 16S rRNA central domain where it helps coordinate assembly of the platform of the 30S subunit. The protein is Small ribosomal subunit protein uS8 of Leptospira interrogans serogroup Icterohaemorrhagiae serovar copenhageni (strain Fiocruz L1-130).